Reading from the N-terminus, the 231-residue chain is Probable glutathione S-transferase GSTU1 (231 aa).

The 80-residue stretch at 5-84 (KELVLLDFWV…YLDDAFPGTP (80 aa)) folds into the GST N-terminal domain. Glutathione contacts are provided by residues serine 15, lysine 42, isoleucine 56, and 68 to 69 (ES). The 124-residue stretch at 97–220 (AAYARATARF…LPSPEKVYDF (124 aa)) folds into the GST C-terminal domain.

The protein belongs to the GST superfamily. Tau family.

The enzyme catalyses RX + glutathione = an S-substituted glutathione + a halide anion + H(+). Functionally, conjugation of reduced glutathione to a wide number of exogenous and endogenous hydrophobic electrophiles. The protein is Probable glutathione S-transferase GSTU1 (GSTU1) of Oryza sativa subsp. indica (Rice).